A 125-amino-acid polypeptide reads, in one-letter code: Small ribosomal subunit protein eS8 (125 aa).

A disordered region spans residues 1–20 (MIWQGRSRRKPSGGFYRKAR).

This sequence belongs to the eukaryotic ribosomal protein eS8 family. Part of the 30S ribosomal subunit.

The polypeptide is Small ribosomal subunit protein eS8 (rps8e) (Archaeoglobus fulgidus (strain ATCC 49558 / DSM 4304 / JCM 9628 / NBRC 100126 / VC-16)).